Reading from the N-terminus, the 215-residue chain is Protein FAM27D1 (215 aa).

Residues 74-172 (QPKTHTHTGM…RGTQADLSSR (99 aa)) form a disordered region. The segment covering 87–108 (THRERERNTQRLRDRERRENGR) has biased composition (basic and acidic residues). Positions 109–122 (HTHRHTHTLTHTHT) are enriched in basic residues. Basic and acidic residues-rich tracts occupy residues 123-139 (HRDT…ETHT) and 149-162 (SAHD…REQP). The segment covering 163–172 (RGTQADLSSR) has biased composition (polar residues).

It belongs to the FAM27 family.

This is Protein FAM27D1 (FAM27D1) from Homo sapiens (Human).